A 586-amino-acid chain; its full sequence is Terminase, large subunit (586 aa).

Positions 1 to 229 (MSTQSNRNAL…TIIWPALYPR (229 aa)) are ATPase activity. The short motif at 58 to 65 (AFRGIGKS) is the Walker A motif element. Positions 156–161 (IIIADD) match the Walker B motif motif. Residues 344–429 (HSYHSCSQNT…ESNFGDGMFG (86 aa)) are nuclease activity. Asp-364, Glu-420, and Asp-518 together coordinate Mg(2+). The interval 571–586 (LYWEDDDVNGDRFINW) is involved in prohead binding.

Belongs to the Teseptimavirus large terminase family. Homopentamer. Interacts with the terminase small subunit; the active complex is probably heterooligomeric. Interacts with the portal protein. The cofactor is Mg(2+).

In terms of biological role, the terminase large subunit acts as an ATP driven molecular motor necessary for viral DNA translocation into empty capsids and as an endonuclease that cuts the viral genome at a unique and precise dsDNA sequence to initiate and to end a packaging reaction. The terminase lies at a unique vertex of the procapsid and is composed of two subunits, a small terminase subunit involved in viral DNA recognition (packaging sequence), and a large terminase subunit possessing endonucleolytic and ATPase activities. Both terminase subunits heterooligomerize and are docked on the portal protein to form the packaging machine. The terminase large subunit exhibits endonuclease activity and cleaves the viral genome concatemer. Once the DNA is packaged, the terminase detaches from the connector and gets replaced by the tail to finish maturation of the virion. This chain is Terminase, large subunit (19), found in Escherichia coli (Bacteriophage T3).